The primary structure comprises 123 residues: Small ribosomal subunit protein uS13 (123 aa).

Residues 96–123 form a disordered region; that stretch reads LPVRGQRTKTNARTRKGPKKTVGARRKK.

Belongs to the universal ribosomal protein uS13 family. In terms of assembly, part of the 30S ribosomal subunit. Forms a loose heterodimer with protein S19. Forms two bridges to the 50S subunit in the 70S ribosome.

Located at the top of the head of the 30S subunit, it contacts several helices of the 16S rRNA. In the 70S ribosome it contacts the 23S rRNA (bridge B1a) and protein L5 of the 50S subunit (bridge B1b), connecting the 2 subunits; these bridges are implicated in subunit movement. Contacts the tRNAs in the A and P-sites. This Desulforamulus reducens (strain ATCC BAA-1160 / DSM 100696 / MI-1) (Desulfotomaculum reducens) protein is Small ribosomal subunit protein uS13.